The chain runs to 188 residues: Ribosome maturation factor RimM (188 aa).

Positions 93–166 (EDEYYDHQLI…RAVIDPPPGL (74 aa)) constitute a PRC barrel domain.

The protein belongs to the RimM family. Binds ribosomal protein uS19.

It is found in the cytoplasm. Functionally, an accessory protein needed during the final step in the assembly of 30S ribosomal subunit, possibly for assembly of the head region. Essential for efficient processing of 16S rRNA. May be needed both before and after RbfA during the maturation of 16S rRNA. It has affinity for free ribosomal 30S subunits but not for 70S ribosomes. In Streptomyces coelicolor (strain ATCC BAA-471 / A3(2) / M145), this protein is Ribosome maturation factor RimM.